The chain runs to 255 residues: Probable esterase ATEG_07663 (255 aa).

Catalysis depends on charge relay system residues Ser-122, Asp-200, and His-227.

It belongs to the LovG family.

In terms of biological role, probable esterase; part of the cluster B that mediates the biosynthesis of azasperpyranones, members of the azaphilone family that exhibit anti-cancer activities. Azasperpyranones are synthesized by 2 clusters, A and B. Cluster A is responsible for the production of the polyhydric phenol moiety while the azaphilonoid scaffold is produced by the cluster B. The non-reducing polyketide synthase ATEG_03629 produces 5-methyl orsellinic acid, which is then reduced to 5-methyl orsellinic aldehyde by the NRPS-like protein ATEG_03630. 5-methyl orsellinic aldehyde is then first hydroxylated by the FAD-dependent monooxygenase ATEG_03635 and subsequently hydroxylated by the cytochrome P450 monooxygenase ATEG_03631 to produce the unstable polyhydric phenol precursor of azasperpyranones. On the other hand, the polyketide synthase ATEG_07659 is responsible for producing the 3,5-dimethyloctadienone moiety from acetyl-CoA, three malonyl-CoA, and two S-adenosyl methionines (SAM). The 3,5-dimethyloctadienone moiety is then loaded onto the SAT domain of ATEG_07661 and extended with four malonyl-CoA and one SAM, which leads to the formation of 2,4-dihydroxy-6-(5,7-dimethyl-2-oxo-trans-3-trans-5-nonadienyl)-3-methylbenzaldehyde (compound 8) after reductive release and aldol condensation. The FAD-dependent monooxygenase ATEG_07662 is the next enzyme in the biosynthesis sequence and hydroxylates the side chain at the benzylic position of compound 8. In Aspergillus nidulans, afoF, the ortholog of the FAD-dependent oxygenase ATEG_07660, is the key enzyme for the biosynthesis of asperfuranone by catalyzing the hydroxylation at C-8 of to prevent the formation of a six-membered ring hemiacetal intermediate and thus facilitating the formation of a five-membered ring to produce asperfuranone. In Aspergillus terreus, ATEG_07660 is probably not functional, which leads to the formation of the six-membered ring hemiacetal intermediate presperpyranone instead of asperfuranone. Finally, ATEG_03636 is involved in the condensation of the polyhydric phenol moiety produced by cluster A and the perasperpyranone precursor produced by cluster B, to yield azasperpyranone A. Further modifications of azasperpyranone A result in the production of derivatives, including azasperpyranone B to F. This Aspergillus terreus (strain NIH 2624 / FGSC A1156) protein is Probable esterase ATEG_07663.